The primary structure comprises 971 residues: Exportin-2 (971 aa).

At methionine 1 the chain carries N-acetylmethionine. Positions 29 to 102 (AEKFLESVEG…KANIVHLMLS (74 aa)) constitute an Importin N-terminal domain. Residue serine 112 is modified to Phosphoserine. Residues lysine 574 and lysine 824 each carry the N6-acetyllysine modification. Serine 931 carries the post-translational modification Phosphoserine.

This sequence belongs to the XPO2/CSE1 family. As to quaternary structure, found in a complex with CSE1L/XPO2, Ran and KPNA2. Binds with high affinity to importin-alpha only in the presence of RanGTP. The complex is dissociated by the combined action of RanBP1 and RanGAP1. Interacts with CFTR. In terms of tissue distribution, ubiquitous. Detected in embryos from 5 to 17 dpc. Highly expressed in adult testis, heart, brain, lung, liver, skeletal muscle, spleen and kidney.

The protein localises to the cytoplasm. The protein resides in the nucleus. Export receptor for importin-alpha. Mediates importin-alpha re-export from the nucleus to the cytoplasm after import substrates (cargos) have been released into the nucleoplasm. In the nucleus binds cooperatively to importin-alpha and to the GTPase Ran in its active GTP-bound form. Docking of this trimeric complex to the nuclear pore complex (NPC) is mediated through binding to nucleoporins. Upon transit of a nuclear export complex into the cytoplasm, disassembling of the complex and hydrolysis of Ran-GTP to Ran-GDP (induced by RANBP1 and RANGAP1, respectively) cause release of the importin-alpha from the export receptor. CSE1L/XPO2 then return to the nuclear compartment and mediate another round of transport. The directionality of nuclear export is thought to be conferred by an asymmetric distribution of the GTP- and GDP-bound forms of Ran between the cytoplasm and nucleus. In Mus musculus (Mouse), this protein is Exportin-2 (Cse1l).